The sequence spans 160 residues: Complexin-4 (160 aa).

A disordered region spans residues 14 to 44 (KNLGFGGGSEEKKEEGGTSDPAAAKGMTREE). Cysteine methyl ester is present on cysteine 157. Cysteine 157 carries the S-farnesyl cysteine lipid modification. Residues 158–160 (SVM) constitute a propeptide, removed in mature form.

This sequence belongs to the complexin/synaphin family. As to quaternary structure, weakly binds to the SNARE core complex containing SNAP25, VAMP2 and STX1A. Farnesylation mediates presynaptic targeting and is important for function in neurotransmitter release. Present specifically in the retina (at protein level). Expressed in the outer nuclear layer of the retina (at protein level). Strongly expressed at rod photoreceptor ribbon synapses (at protein level). Not expressed at conventional amacrine cell synapses, nor at cone photoreceptor ribbon synapses (at protein level). Weakly expressed at cone photoreceptor synaptic terminals (at protein level). Not expressed in the brain (at protein level).

Its subcellular location is the synapse. The protein localises to the cell membrane. Functionally, complexin that regulates SNARE protein complex-mediated synaptic vesicle fusion. Required for the maintenance of synaptic ultrastructure in the adult retina. Positively regulates synaptic transmission through synaptic vesicle availability and exocytosis of neurotransmitters at photoreceptor ribbon synapses in the retina. Suppresses tonic photoreceptor activity and baseline 'noise' by suppression of Ca(2+) vesicle tonic release and the facilitation of evoked synchronous and asynchronous Ca(2+) vesicle release. The protein is Complexin-4 (Cplx4) of Mus musculus (Mouse).